The following is a 330-amino-acid chain: DNA-directed RNA polymerase subunit alpha (330 aa).

Residues 1 to 237 are alpha N-terminal domain (alpha-NTD); that stretch reads MYTEINEMLT…RQLHAFVDMK (237 aa). The interval 251–330 is alpha C-terminal domain (alpha-CTD); sequence FDPVLLRSVD…ENWPPASLGE (80 aa).

The protein belongs to the RNA polymerase alpha chain family. In terms of assembly, homodimer. The RNAP catalytic core consists of 2 alpha, 1 beta, 1 beta' and 1 omega subunit. When a sigma factor is associated with the core the holoenzyme is formed, which can initiate transcription.

The catalysed reaction is RNA(n) + a ribonucleoside 5'-triphosphate = RNA(n+1) + diphosphate. DNA-dependent RNA polymerase catalyzes the transcription of DNA into RNA using the four ribonucleoside triphosphates as substrates. This chain is DNA-directed RNA polymerase subunit alpha, found in Legionella pneumophila (strain Paris).